The sequence spans 461 residues: tRNA-splicing endonuclease subunit Sen2 (461 aa).

Disordered regions lie at residues 140–176 and 190–210; these read GAEQ…TSSP and GDPA…DVKE. Polar residues predominate over residues 144–176; the sequence is TGDSCDTVCPNTENTELSGQSSTDTGNIATSSP. A compositionally biased stretch (basic and acidic residues) spans 201 to 210; that stretch reads KEQEPADVKE. Residues Tyr-365, His-373, and Lys-412 contribute to the active site.

Belongs to the tRNA-intron endonuclease family. As to quaternary structure, tRNA splicing endonuclease is a heterotetramer composed of SEN2, SEN15, SEN34/LENG5 and SEN54.

It localises to the nucleus. The catalysed reaction is pretRNA = a 3'-half-tRNA molecule with a 5'-OH end + a 5'-half-tRNA molecule with a 2',3'-cyclic phosphate end + an intron with a 2',3'-cyclic phosphate and a 5'-hydroxyl terminus.. Constitutes one of the two catalytic subunit of the tRNA-splicing endonuclease complex, a complex responsible for identification and cleavage of the splice sites in pre-tRNA. It cleaves pre-tRNA at the 5'- and 3'-splice sites to release the intron. The products are an intron and two tRNA half-molecules bearing 2',3'-cyclic phosphate and 5'-OH termini. There are no conserved sequences at the splice sites, but the intron is invariably located at the same site in the gene, placing the splice sites an invariant distance from the constant structural features of the tRNA body. Probably carries the active site for 5'-splice site cleavage. The tRNA splicing endonuclease is also involved in mRNA processing via its association with pre-mRNA 3'-end processing factors, establishing a link between pre-tRNA splicing and pre-mRNA 3'-end formation, suggesting that the endonuclease subunits function in multiple RNA-processing events. The protein is tRNA-splicing endonuclease subunit Sen2 (TSEN2) of Gallus gallus (Chicken).